A 373-amino-acid chain; its full sequence is MKLFFRIVTLVAVVAMSLADMAPAWALTSRIKDIASLQAGRDNQLIGYGLIVGLQGTGDGFRSSPFTEQSMRAMLQNLGISTQGGQSNAKNTAAVMVTANLPPFASPGSRLDVTVSSLGDATSLRGGTLVMTSLSGADGQIYAVAQGSVIVSGFQAQGQAATVTEGVTTAGRVPGGAIIERELPSHFKDSVNLVLQLRNPDFSTAIRIADIVNGYASARFGGPVAEAKDSQEVVIQKPRTADLTRLMADVENLIVETDTPAKVVINERTGTIVIGSDVRVSPVAVSYGTLTVQVTETPQIIQPEPFSRGRTAVQPQTDIAAEQTGGRVAIIDGPDLRTLVAGLNNIGVKPDGIIAILQGIKSAGALQAELVLQ.

A signal peptide spans 1 to 26; the sequence is MKLFFRIVTLVAVVAMSLADMAPAWA.

The protein belongs to the FlgI family. As to quaternary structure, the basal body constitutes a major portion of the flagellar organelle and consists of four rings (L,P,S, and M) mounted on a central rod.

Its subcellular location is the periplasm. The protein resides in the bacterial flagellum basal body. In terms of biological role, assembles around the rod to form the L-ring and probably protects the motor/basal body from shearing forces during rotation. This chain is Flagellar P-ring protein, found in Rhizobium etli (strain ATCC 51251 / DSM 11541 / JCM 21823 / NBRC 15573 / CFN 42).